Reading from the N-terminus, the 272-residue chain is Phosphate import ATP-binding protein PstB 1 (272 aa).

The ABC transporter domain maps to 26–267 (ISIENLNLFY…PMKKQTEDYI (242 aa)). Residue 58-65 (GPSGCGKS) participates in ATP binding.

The protein belongs to the ABC transporter superfamily. Phosphate importer (TC 3.A.1.7) family. In terms of assembly, the complex is composed of two ATP-binding proteins (PstB), two transmembrane proteins (PstC and PstA) and a solute-binding protein (PstS).

Its subcellular location is the cell inner membrane. It carries out the reaction phosphate(out) + ATP + H2O = ADP + 2 phosphate(in) + H(+). In terms of biological role, part of the ABC transporter complex PstSACB involved in phosphate import. Responsible for energy coupling to the transport system. The sequence is that of Phosphate import ATP-binding protein PstB 1 from Vibrio parahaemolyticus serotype O3:K6 (strain RIMD 2210633).